The following is a 223-amino-acid chain: uncharacterized protein (223 aa).

Residues 29–220 form the Tyr recombinase domain; that stretch reads KQTYKMFKED…AKEILKNIGD (192 aa). Residues R71, K103, H170, R173, and H196 contribute to the active site. Y205 (O-(3'-phospho-DNA)-tyrosine intermediate) is an active-site residue.

Belongs to the 'phage' integrase family.

This is an uncharacterized protein from Methanocaldococcus jannaschii (strain ATCC 43067 / DSM 2661 / JAL-1 / JCM 10045 / NBRC 100440) (Methanococcus jannaschii).